The primary structure comprises 347 residues: Holliday junction branch migration complex subunit RuvB (347 aa).

Residues 1-186 (MKDENSINFL…FGITARFELY (186 aa)) are large ATPase domain (RuvB-L). ATP-binding positions include Leu-25, Arg-26, Gly-67, Lys-70, Thr-71, Thr-72, 133–135 (EDY), Arg-176, Tyr-186, and Arg-223. Thr-71 lines the Mg(2+) pocket. Residues 187–257 (SEIELVEIIK…IVAIGLEMLR (71 aa)) form a small ATPAse domain (RuvB-S) region. The interval 260-347 (GEGLDEQDRN…NLNENQRVSF (88 aa)) is head domain (RuvB-H). DNA-binding residues include Arg-315 and Arg-320.

It belongs to the RuvB family. Homohexamer. Forms an RuvA(8)-RuvB(12)-Holliday junction (HJ) complex. HJ DNA is sandwiched between 2 RuvA tetramers; dsDNA enters through RuvA and exits via RuvB. An RuvB hexamer assembles on each DNA strand where it exits the tetramer. Each RuvB hexamer is contacted by two RuvA subunits (via domain III) on 2 adjacent RuvB subunits; this complex drives branch migration. In the full resolvosome a probable DNA-RuvA(4)-RuvB(12)-RuvC(2) complex forms which resolves the HJ.

It is found in the cytoplasm. The catalysed reaction is ATP + H2O = ADP + phosphate + H(+). Its function is as follows. The RuvA-RuvB-RuvC complex processes Holliday junction (HJ) DNA during genetic recombination and DNA repair, while the RuvA-RuvB complex plays an important role in the rescue of blocked DNA replication forks via replication fork reversal (RFR). RuvA specifically binds to HJ cruciform DNA, conferring on it an open structure. The RuvB hexamer acts as an ATP-dependent pump, pulling dsDNA into and through the RuvAB complex. RuvB forms 2 homohexamers on either side of HJ DNA bound by 1 or 2 RuvA tetramers; 4 subunits per hexamer contact DNA at a time. Coordinated motions by a converter formed by DNA-disengaged RuvB subunits stimulates ATP hydrolysis and nucleotide exchange. Immobilization of the converter enables RuvB to convert the ATP-contained energy into a lever motion, pulling 2 nucleotides of DNA out of the RuvA tetramer per ATP hydrolyzed, thus driving DNA branch migration. The RuvB motors rotate together with the DNA substrate, which together with the progressing nucleotide cycle form the mechanistic basis for DNA recombination by continuous HJ branch migration. Branch migration allows RuvC to scan DNA until it finds its consensus sequence, where it cleaves and resolves cruciform DNA. This chain is Holliday junction branch migration complex subunit RuvB, found in Borreliella afzelii (strain PKo) (Borrelia afzelii).